The following is a 1871-amino-acid chain: Girdin (1871 aa).

The region spanning 12–132 (QFMTSPLVTW…KLLLLLLGCA (121 aa)) is the Calponin-homology (CH) domain. Residues 196 to 425 (HLKRLIDERD…EMAQKQSMDE (230 aa)) adopt a coiled-coil conformation. S233, S237, and S449 each carry phosphoserine. The stretch at 458–1385 (TSSRLLKLEM…KIMDQYKFYD (928 aa)) forms a coiled coil. Disordered stretches follow at residues 816–842 (ENKS…KRLR) and 1010–1035 (RQDE…RESQ). Phosphoserine is present on S1020. Residues 1026–1035 (EDNKWERESQ) are compositionally biased toward basic and acidic residues. Position 1387 is a phosphoserine (S1387). A phosphoinositide-binding region spans residues 1390–1408 (RRRGNWITLKMRKLIKSKK). Over residues 1407–1416 (KKDINRERQK) the composition is skewed to basic and acidic residues. 2 disordered regions span residues 1407 to 1459 (KKDI…LGTK) and 1559 to 1601 (TTSF…SNNN). A Phosphoserine; by PKB/AKT1 modification is found at S1417. Polar residues-rich tracts occupy residues 1417-1430 (SLTL…SSEG), 1445-1459 (VGSN…LGTK), and 1559-1578 (TTSF…STGS). Phosphothreonine is present on T1421. Positions 1672 to 1702 (KTGSPGSEVVTLQQFLEESNKLTSVQIKSSS) match the GBA motif. The residue at position 1673 (T1673) is a Phosphothreonine. S1675 is subject to Phosphoserine. S1690 carries the post-translational modification Phosphoserine; by PKC/PRKCQ. The segment at 1713–1823 (SLSVSSDFLG…GTTRRTSIHD (111 aa)) is SH2-like; required for interaction with growth factor receptors. A Phosphoserine modification is found at S1717. Positions 1736 to 1871 (SGKTPGDFYD…KSRSREQQSS (136 aa)) are disordered. The span at 1743–1763 (FYDRRTTKPEFLRPGPRKTED) shows a compositional bias: basic and acidic residues. Phosphotyrosine is present on residues Y1765 and Y1799. Polar residues-rich tracts occupy residues 1787–1799 (SSLS…SNPY) and 1807–1818 (SVISTAEGTTRR). A phosphoserine mark is found at S1820 and S1837. Residues 1820-1830 (SIHDFLTKDSR) are compositionally biased toward basic and acidic residues. Residues 1838 to 1851 (PPAAADSNTTAASN) show a composition bias toward low complexity. A compositionally biased stretch (basic and acidic residues) spans 1854-1871 (KVQESRNSKSRSREQQSS).

It belongs to the CCDC88 family. In terms of assembly, homodimer. Interacts (via GBA motif) with guanine nucleotide-binding protein G(i) alpha subunits GNAI1, GNAI2 and GNAI3. Also interacts (via GNA motif) with guanine nucleotide-binding protein G(s) alpha subunit GNAS. Interaction with G(i) alpha subunits occurs before interaction with GNAS and is regulated by phosphorylation; phosphorylation at Ser-1675 enhances binding to G(i) alpha subunits while phosphorylation at Ser-1690 abolishes G(i) alpha subunit binding, promoting binding to GNAS. Interacts (via C-terminal SH2-like region) with growth factor receptors EGFR, INSR and KDR/VEGFR2 (via their autophosphorylated cytoplasmic tails). Forms a complex with EGFR and GNAI3 which leads to enhanced EGFR signaling and triggering of cell migration; ligand stimulation is required for recruitment of GNAI3 to the complex. Interacts (tyrosine-phosphorylated form) with phosphatidylinositol 3-kinase (PI3K) regulatory subunit PIK3R1/p85a (via SH2 domains); the interaction enables recruitment of PIK3R1 to the EGFR receptor, enhancing PI3K activity and cell migration. Interacts with serine/threonine-protein kinase PRKCQ; the interaction leads to phosphorylation of CCDC88A and inhibition of its guanine nucleotide exchange factor activity. Interacts (via C-terminus) with DISC1; the interaction is direct. Interacts with AKT proteins; the interaction is inhibited in the presence of DISC1. Interacts with AKT1/PKB (via C-terminus). The non-phosphorylated form interacts with phosphatidylinositol 4-phosphate [PI(4)P] and weakly with phosphatidylinositol 3-phosphate [PI(3)P]. Interacts with microtubules. Interacts with actin. Phosphorylation is induced by epidermal growth factor (EGF) in a phosphoinositide 3-kinase (PI3K)-dependent manner. Phosphorylation by AKT1/PKB is necessary for delocalization from the cell membrane and for cell migration. Phosphorylated on tyrosine residues which promotes binding to phosphatidylinositol 3-kinase (PI3K) regulatory subunit PIK3R1/p85a and enhances PI3K activity. Tyrosine-phosphorylated by both receptor and non-receptor tyrosine kinases in vitro. Tyrosine phosphorylation is required for AKT1-dependent phosphorylation of Ser-1417. Phosphorylation at Ser-1690 by PRKCQ disrupts interaction with GNAI3 and inhibits guanine nucleotide exchange factor activity. In terms of tissue distribution, expressed ubiquitously.

It localises to the cell membrane. The protein resides in the cytoplasm. Its subcellular location is the cytosol. It is found in the cytoplasmic vesicle. The protein localises to the cell projection. It localises to the lamellipodium. The protein resides in the cytoskeleton. Its subcellular location is the cilium basal body. It is found in the microtubule organizing center. The protein localises to the centrosome. It localises to the centriole. In terms of biological role, bifunctional modulator of guanine nucleotide-binding proteins (G proteins). Acts as a non-receptor guanine nucleotide exchange factor which binds to and activates guanine nucleotide-binding protein G(i) alpha subunits. Also acts as a guanine nucleotide dissociation inhibitor for guanine nucleotide-binding protein G(s) subunit alpha GNAS. Essential for cell migration. Interacts in complex with G(i) alpha subunits with the EGFR receptor, retaining EGFR at the cell membrane following ligand stimulation and promoting EGFR signaling which triggers cell migration. Binding to Gi-alpha subunits displaces the beta and gamma subunits from the heterotrimeric G-protein complex which enhances phosphoinositide 3-kinase (PI3K)-dependent phosphorylation and kinase activity of AKT1/PKB. Phosphorylation of AKT1/PKB induces the phosphorylation of downstream effectors GSK3 and FOXO1/FKHR, and regulates DNA replication and cell proliferation. Binds in its tyrosine-phosphorylated form to the phosphatidylinositol 3-kinase (PI3K) regulatory subunit PIK3R1 which enables recruitment of PIK3R1 to the EGFR receptor, enhancing PI3K activity and cell migration. Plays a role as a key modulator of the AKT-mTOR signaling pathway, controlling the tempo of the process of newborn neuron integration during adult neurogenesis, including correct neuron positioning, dendritic development and synapse formation. Inhibition of G(s) subunit alpha GNAS leads to reduced cellular levels of cAMP and suppression of cell proliferation. Essential for the integrity of the actin cytoskeleton. Required for formation of actin stress fibers and lamellipodia. May be involved in membrane sorting in the early endosome. Plays a role in ciliogenesis and cilium morphology and positioning and this may partly be through regulation of the localization of scaffolding protein CROCC/Rootletin. This chain is Girdin (CCDC88A), found in Homo sapiens (Human).